We begin with the raw amino-acid sequence, 273 residues long: Ribosomal RNA small subunit methyltransferase A (273 aa).

Residues N19, L21, G46, E71, D94, and N117 each contribute to the S-adenosyl-L-methionine site.

It belongs to the class I-like SAM-binding methyltransferase superfamily. rRNA adenine N(6)-methyltransferase family. RsmA subfamily.

Its subcellular location is the cytoplasm. It catalyses the reaction adenosine(1518)/adenosine(1519) in 16S rRNA + 4 S-adenosyl-L-methionine = N(6)-dimethyladenosine(1518)/N(6)-dimethyladenosine(1519) in 16S rRNA + 4 S-adenosyl-L-homocysteine + 4 H(+). Its function is as follows. Specifically dimethylates two adjacent adenosines (A1518 and A1519) in the loop of a conserved hairpin near the 3'-end of 16S rRNA in the 30S particle. May play a critical role in biogenesis of 30S subunits. This is Ribosomal RNA small subunit methyltransferase A from Burkholderia ambifaria (strain MC40-6).